The chain runs to 442 residues: uncharacterized protein (442 aa).

Residues 1–238 (MKAEGLSGGY…QSIKAVYDTD (238 aa)) enclose the ABC transporter domain. 33-40 (GPNGSGKT) lines the ATP pocket.

It belongs to the ABC transporter superfamily. As to quaternary structure, the complex is composed of two ATP-binding proteins (YvrA), two transmembrane proteins (YvrB) and a solute-binding protein (YvrC).

Probably part of an ABC transporter complex. Probably responsible for energy coupling to the transport system. This is an uncharacterized protein from Bacillus subtilis (strain 168).